A 146-amino-acid polypeptide reads, in one-letter code: Hemoglobin subunit beta (146 aa).

The 145-residue stretch at 2–146 (FLTPEENGHV…VANALAHKYH (145 aa)) folds into the Globin domain. At Thr12 the chain carries Phosphothreonine. Ser44 bears the Phosphoserine mark. An N6-acetyllysine modification is found at Lys59. A heme b-binding site is contributed by His63. Position 82 is an N6-acetyllysine (Lys82). Residue His92 participates in heme b binding. An S-nitrosocysteine modification is found at Cys93. Residue Lys144 is modified to N6-acetyllysine.

Belongs to the globin family. Heterotetramer of two alpha chains and two beta chains. Red blood cells.

Its function is as follows. Involved in oxygen transport from the lung to the various peripheral tissues. This is Hemoglobin subunit beta (HBB) from Hapalemur griseus (Gray gentle lemur).